The chain runs to 126 residues: Fluoride-specific ion channel FluC (126 aa).

The next 2 membrane-spanning stretches (helical) occupy residues 2–22 and 36–56; these read IKSL…RWLL and GTLV…AYFL. Na(+)-binding residues include Gly75 and Ser78. 2 consecutive transmembrane segments (helical) span residues 80–100 and 105–125; these read FSTF…IWAL and VHVI…TILF.

Belongs to the fluoride channel Fluc/FEX (TC 1.A.43) family. Homodimer.

The protein localises to the cell inner membrane. It catalyses the reaction fluoride(in) = fluoride(out). With respect to regulation, na(+) is not transported, but it plays an essential structural role and its presence is essential for fluoride channel function. Fluoride-specific ion channel. Important for reducing fluoride concentration in the cell, thus reducing its toxicity. Is highly specific for fluoride ions and cannot transport chloride ions. The polypeptide is Fluoride-specific ion channel FluC (Escherichia coli O1:K1 / APEC).